We begin with the raw amino-acid sequence, 372 residues long: uncharacterized protein (372 aa).

Residues 1–33 (MVRRALRLAAGTASLAAGTWLLRALHGTPAALG) form the signal peptide.

This sequence to K.pneumoniae RomA.

This is an uncharacterized protein from Mycobacterium bovis (strain ATCC BAA-935 / AF2122/97).